Here is a 339-residue protein sequence, read N- to C-terminus: MAETITTDVAIIGAGPAGLFAVFECGMLKLGTVLIDALGEVGGQCAALYPEKPIYDIPALPAIEAAGLIENLERQIAPFAAPRLLGRLVTAISGSSGDFTIGTDLGDIVRAKAIIIAAGAGAFGPNRPPLEGLAAYEASGAVQYYVKRREALRGKRVVIAGGGDSAVDWALALCGIASSIAVVHRRPKFRAAPESAAQLAEAAARGDIDLVIPYQLHALHGADGALRTVEVADLDGATRHLEADVLLPFFGLATDLGPVATWGLELSLHHVLVTPSTCETSTRGIFAIGDVAQYPGKLKLILQGFSEAAMAAHAIHPIVHPDEALHFEYSTSKGVPGTA.

The FAD site is built by aspartate 36, glutamine 44, tyrosine 49, valine 89, phenylalanine 123, aspartate 290, and threonine 331.

Belongs to the ferredoxin--NADP reductase type 2 family. Homodimer. It depends on FAD as a cofactor.

The enzyme catalyses 2 reduced [2Fe-2S]-[ferredoxin] + NADP(+) + H(+) = 2 oxidized [2Fe-2S]-[ferredoxin] + NADPH. The chain is Ferredoxin--NADP reductase from Acidiphilium cryptum (strain JF-5).